Here is a 300-residue protein sequence, read N- to C-terminus: tRNA dimethylallyltransferase (300 aa).

Residue 11 to 18 (GPTAVGKS) participates in ATP binding. 13 to 18 (TAVGKS) is a binding site for substrate. Residues 35-38 (DSIQ) are interaction with substrate tRNA.

The protein belongs to the IPP transferase family. In terms of assembly, monomer. It depends on Mg(2+) as a cofactor.

The enzyme catalyses adenosine(37) in tRNA + dimethylallyl diphosphate = N(6)-dimethylallyladenosine(37) in tRNA + diphosphate. Its function is as follows. Catalyzes the transfer of a dimethylallyl group onto the adenine at position 37 in tRNAs that read codons beginning with uridine, leading to the formation of N6-(dimethylallyl)adenosine (i(6)A). The polypeptide is tRNA dimethylallyltransferase (Borrelia duttonii (strain Ly)).